A 352-amino-acid polypeptide reads, in one-letter code: Biotin synthase (352 aa).

The Radical SAM core domain occupies 44–262 (NRVQVSTLLS…LAVARILMPK (219 aa)). Residues cysteine 59, cysteine 63, and cysteine 66 each contribute to the [4Fe-4S] cluster site. 4 residues coordinate [2Fe-2S] cluster: cysteine 103, cysteine 134, cysteine 194, and arginine 266.

The protein belongs to the radical SAM superfamily. Biotin synthase family. As to quaternary structure, homodimer. It depends on [4Fe-4S] cluster as a cofactor. The cofactor is [2Fe-2S] cluster.

It carries out the reaction (4R,5S)-dethiobiotin + (sulfur carrier)-SH + 2 reduced [2Fe-2S]-[ferredoxin] + 2 S-adenosyl-L-methionine = (sulfur carrier)-H + biotin + 2 5'-deoxyadenosine + 2 L-methionine + 2 oxidized [2Fe-2S]-[ferredoxin]. It functions in the pathway cofactor biosynthesis; biotin biosynthesis; biotin from 7,8-diaminononanoate: step 2/2. In terms of biological role, catalyzes the conversion of dethiobiotin (DTB) to biotin by the insertion of a sulfur atom into dethiobiotin via a radical-based mechanism. This Pseudomonas syringae pv. syringae (strain B728a) protein is Biotin synthase.